Here is an 802-residue protein sequence, read N- to C-terminus: Leucine--tRNA ligase (802 aa).

Positions 40–51 (PYPSGAGLHVGH) match the 'HIGH' region motif. The 'KMSKS' region motif lies at 576–580 (KMSKS). K579 is a binding site for ATP.

It belongs to the class-I aminoacyl-tRNA synthetase family.

The protein localises to the cytoplasm. The catalysed reaction is tRNA(Leu) + L-leucine + ATP = L-leucyl-tRNA(Leu) + AMP + diphosphate. The sequence is that of Leucine--tRNA ligase from Bacillus mycoides (strain KBAB4) (Bacillus weihenstephanensis).